We begin with the raw amino-acid sequence, 627 residues long: Putative polyketide hydroxylase (627 aa).

Residues 22–51 (PVLV…LVER) and 309–319 (YRSGRVLLAGD) each bind FAD. The interval 370–469 (AEATSARAAH…GGGPGGGGPQ (100 aa)) is disordered. A compositionally biased stretch (gly residues) spans 395–469 (AGGGGPGAGT…GGGPGGGGPQ (75 aa)).

It belongs to the PheA/TfdB FAD monooxygenase family. FAD serves as cofactor.

In terms of biological role, involved in developmentally regulated synthesis of a compound biosynthetically related to polyketide antibiotics which is essential for spore color in Streptococcus coelicolor. This chain is Putative polyketide hydroxylase, found in Streptomyces coelicolor (strain ATCC BAA-471 / A3(2) / M145).